Reading from the N-terminus, the 825-residue chain is Neuroligin-3 (825 aa).

The first 34 residues, 1–34 (MWLQPSLSLSPTPTVGRSLCLTLGFLSLVLRAST), serve as a signal peptide directing secretion. The Extracellular segment spans residues 35 to 686 (QAPAPTVNTH…NPRDYSTELS (652 aa)). N-linked (GlcNAc...) asparagine glycosylation is present at N95. A disulfide bond links C103 and C138. The interval 151-172 (SGAKKQGEDLADNDGDEDEDIR) is disordered. Residues 159–171 (DLADNDGDEDEDI) show a composition bias toward acidic residues. Cystine bridges form between C317–C328 and C487–C521. N-linked (GlcNAc...) asparagine glycosylation is present at N522. Polar residues-rich tracts occupy residues 622–633 (TKVPPPDTTHSS) and 654–666 (AYSNENAPGSWNG). Positions 622-668 (TKVPPPDTTHSSHITRRPNGKTWSTKRPAISPAYSNENAPGSWNGDQ) are disordered. Residues 687-707 (VTIAVGASLLFLNVLAFAALY) traverse the membrane as a helical segment. At 708 to 825 (YRKDKRRQEP…LPHSHSTTRV (118 aa)) the chain is on the cytoplasmic side. S722 is subject to Phosphoserine. Y769 is subject to Phosphotyrosine.

This sequence belongs to the type-B carboxylesterase/lipase family. Homodimer, and heterodimer with NLGN1 and NLGN2. Interacts with neurexins NRXN1, NRXN2 and NRXN3. Interaction with neurexins is mediated by heparan sulfate glycan modification on neurexin. Interacts (via its C-terminus) with DLG4/PSD-95 (via PDZ domain 3). Brain and arteries (at protein level). Detected in heart, brain, spleen, lung, liver, skeletal muscle, kidney and testis. Expressed in olfactory bulb and olfactory epithelium. Found in olfactory ensheathing glia but not in olfactory neurons, and in developing peripheral glia.

It is found in the cell membrane. The protein resides in the synapse. In terms of biological role, cell surface protein involved in cell-cell-interactions via its interactions with neurexin family members. Plays a role in synapse function and synaptic signal transmission, and probably mediates its effects by recruiting and clustering other synaptic proteins. May promote the initial formation of synapses, but is not essential for this. May also play a role in glia-glia or glia-neuron interactions in the developing peripheral nervous system. The sequence is that of Neuroligin-3 (Nlgn3) from Mus musculus (Mouse).